The following is a 74-amino-acid chain: Translation initiation factor IF-1 (74 aa).

In terms of domain architecture, S1-like spans 1–73 (MSNKEDIIKM…TKGRIVYRKK (73 aa)).

The protein belongs to the IF-1 family. In terms of assembly, component of the 30S ribosomal translation pre-initiation complex which assembles on the 30S ribosome in the order IF-2 and IF-3, IF-1 and N-formylmethionyl-tRNA(fMet); mRNA recruitment can occur at any time during PIC assembly.

The protein resides in the cytoplasm. Functionally, one of the essential components for the initiation of protein synthesis. Stabilizes the binding of IF-2 and IF-3 on the 30S subunit to which N-formylmethionyl-tRNA(fMet) subsequently binds. Helps modulate mRNA selection, yielding the 30S pre-initiation complex (PIC). Upon addition of the 50S ribosomal subunit IF-1, IF-2 and IF-3 are released leaving the mature 70S translation initiation complex. This chain is Translation initiation factor IF-1, found in Thermosipho melanesiensis (strain DSM 12029 / CIP 104789 / BI429).